The chain runs to 107 residues: MISGDTILFALMVVTCVNWARYFTALRTLIYIMREAHPLLYQQVDGGGFFTTHGNMTKQVRLFSYIKSKEYHHHHDEVFTSKCDRVRQLFILSSALLGVTLLSSFIV.

2 helical membrane passes run 6–23 (TILFALMVVTCVNWARYF) and 89–106 (LFILSSALLGVTLLSSFI).

It belongs to the universal stress protein B family.

Its subcellular location is the cell inner membrane. The sequence is that of Universal stress protein B homolog from Vibrio atlanticus (strain LGP32) (Vibrio splendidus (strain Mel32)).